Reading from the N-terminus, the 148-residue chain is Large ribosomal subunit protein uL15A (148 aa).

Basic residues-rich tracts occupy residues 1–13 (MPTHVSKTRKLRG) and 21–31 (RIGKHRKHPGG). Residues 1–36 (MPTHVSKTRKLRGHVSAGHGRIGKHRKHPGGRGKAG) form a disordered region.

Belongs to the universal ribosomal protein uL15 family. Component of the large ribosomal subunit (LSU). Mature yeast ribosomes consist of a small (40S) and a large (60S) subunit. The 40S small subunit contains 1 molecule of ribosomal RNA (18S rRNA) and at least 33 different proteins. The large 60S subunit contains 3 rRNA molecules (25S, 5.8S and 5S rRNA) and at least 46 different proteins.

It is found in the cytoplasm. In terms of biological role, component of the ribosome, a large ribonucleoprotein complex responsible for the synthesis of proteins in the cell. The small ribosomal subunit (SSU) binds messenger RNAs (mRNAs) and translates the encoded message by selecting cognate aminoacyl-transfer RNA (tRNA) molecules. The large subunit (LSU) contains the ribosomal catalytic site termed the peptidyl transferase center (PTC), which catalyzes the formation of peptide bonds, thereby polymerizing the amino acids delivered by tRNAs into a polypeptide chain. The nascent polypeptides leave the ribosome through a tunnel in the LSU and interact with protein factors that function in enzymatic processing, targeting, and the membrane insertion of nascent chains at the exit of the ribosomal tunnel. The sequence is that of Large ribosomal subunit protein uL15A (rpl2802) from Schizosaccharomyces pombe (strain 972 / ATCC 24843) (Fission yeast).